We begin with the raw amino-acid sequence, 97 residues long: Small ribosomal subunit protein bS21 (97 aa).

Residues 37–97 are disordered; the sequence is EKPSVRKARE…APASSPTTTA (61 aa). Over residues 76–97 the composition is skewed to low complexity; sequence RAVAPRRPAAAPAPASSPTTTA.

This sequence belongs to the bacterial ribosomal protein bS21 family.

The chain is Small ribosomal subunit protein bS21 from Methylobacterium sp. (strain 4-46).